A 201-amino-acid chain; its full sequence is Small ribosomal subunit protein uS4c (201 aa).

The segment at 15–43 (LGALPGLTSKRPSPGSDLRNQSRSGKRSQ) is disordered. The region spanning 89–150 (MRLDNILFRL…EQRSRALIQK (62 aa)) is the S4 RNA-binding domain.

Belongs to the universal ribosomal protein uS4 family. Part of the 30S ribosomal subunit. Contacts protein S5. The interaction surface between S4 and S5 is involved in control of translational fidelity.

The protein resides in the plastid. It is found in the chloroplast. In terms of biological role, one of the primary rRNA binding proteins, it binds directly to 16S rRNA where it nucleates assembly of the body of the 30S subunit. Its function is as follows. With S5 and S12 plays an important role in translational accuracy. This chain is Small ribosomal subunit protein uS4c (rps4), found in Ceratophyllum demersum (Rigid hornwort).